The following is a 606-amino-acid chain: Sulfite reductase [NADPH] flavoprotein alpha-component (606 aa).

The 139-residue stretch at 64–202 (VTLISASQTG…QAQQWRQQVV (139 aa)) folds into the Flavodoxin-like domain. Residues 70–75 (SQTGNA), 117–120 (STQG), and 153–162 (LGDTSYEHFC) each bind FMN. A compositionally biased stretch (low complexity) spans 212 to 234 (QSTAPTQSTTPAAAAITSGGTTT). Residues 212–235 (QSTAPTQSTTPAAAAITSGGTTTV) form a disordered region. The FAD-binding FR-type domain occupies 241-455 (TAPLTAQLSV…IEHNDNFRLP (215 aa)). Residues Thr-329, Lys-363, 393–396 (RLYS), 411–413 (TVG), Tyr-417, and 426–429 (GGAS) each bind FAD. Residues 526 to 527 (SR), 532 to 536 (KIYVQ), and Asp-568 contribute to the NADP(+) site. Tyr-606 contacts FAD.

This sequence belongs to the NADPH-dependent sulphite reductase flavoprotein subunit CysJ family. It in the N-terminal section; belongs to the flavodoxin family. In the C-terminal section; belongs to the flavoprotein pyridine nucleotide cytochrome reductase family. Alpha(8)-beta(8). The alpha component is a flavoprotein, the beta component is a hemoprotein. It depends on FAD as a cofactor. FMN is required as a cofactor.

It catalyses the reaction hydrogen sulfide + 3 NADP(+) + 3 H2O = sulfite + 3 NADPH + 4 H(+). The protein operates within sulfur metabolism; hydrogen sulfide biosynthesis; hydrogen sulfide from sulfite (NADPH route): step 1/1. Component of the sulfite reductase complex that catalyzes the 6-electron reduction of sulfite to sulfide. This is one of several activities required for the biosynthesis of L-cysteine from sulfate. The flavoprotein component catalyzes the electron flow from NADPH -&gt; FAD -&gt; FMN to the hemoprotein component. This chain is Sulfite reductase [NADPH] flavoprotein alpha-component, found in Yersinia pestis bv. Antiqua (strain Antiqua).